Here is a 200-residue protein sequence, read N- to C-terminus: Pyridoxal 5'-phosphate synthase subunit PdxT (200 aa).

52–54 serves as a coordination point for L-glutamine; that stretch reads GES. The Nucleophile role is filled by C84. Residues R116 and 145 to 146 contribute to the L-glutamine site; that span reads IR. Active-site charge relay system residues include H181 and E183.

It belongs to the glutaminase PdxT/SNO family. In terms of assembly, in the presence of PdxS, forms a dodecamer of heterodimers. Only shows activity in the heterodimer.

It catalyses the reaction aldehydo-D-ribose 5-phosphate + D-glyceraldehyde 3-phosphate + L-glutamine = pyridoxal 5'-phosphate + L-glutamate + phosphate + 3 H2O + H(+). It carries out the reaction L-glutamine + H2O = L-glutamate + NH4(+). It functions in the pathway cofactor biosynthesis; pyridoxal 5'-phosphate biosynthesis. Functionally, catalyzes the hydrolysis of glutamine to glutamate and ammonia as part of the biosynthesis of pyridoxal 5'-phosphate. The resulting ammonia molecule is channeled to the active site of PdxS. This Saccharolobus solfataricus (strain ATCC 35092 / DSM 1617 / JCM 11322 / P2) (Sulfolobus solfataricus) protein is Pyridoxal 5'-phosphate synthase subunit PdxT.